The following is a 163-amino-acid chain: Transcriptional repressor NrdR (163 aa).

The segment at 3–34 (CPKCNYLKSSVVDSRQAEEGNTIRRRRECENC) is a zinc-finger region. The ATP-cone domain maps to 49–139 (LLVVKKDGTR…VYRSFKDVDE (91 aa)).

The protein belongs to the NrdR family. It depends on Zn(2+) as a cofactor.

Its function is as follows. Negatively regulates transcription of bacterial ribonucleotide reductase nrd genes and operons by binding to NrdR-boxes. This is Transcriptional repressor NrdR from Streptococcus mutans serotype c (strain ATCC 700610 / UA159).